A 196-amino-acid chain; its full sequence is Small ribosomal subunit protein uS4c (196 aa).

Residues 16–36 (GTLPGLTSKRPKSGSDLKTQL) are disordered. The S4 RNA-binding domain occupies 89–150 (MRLDNILFRL…KQRSKALIQN (62 aa)).

This sequence belongs to the universal ribosomal protein uS4 family. As to quaternary structure, part of the 30S ribosomal subunit. Contacts protein S5. The interaction surface between S4 and S5 is involved in control of translational fidelity.

The protein resides in the plastid. It is found in the chloroplast. Functionally, one of the primary rRNA binding proteins, it binds directly to 16S rRNA where it nucleates assembly of the body of the 30S subunit. With S5 and S12 plays an important role in translational accuracy. In Rhapis humilis (Slender lady palm), this protein is Small ribosomal subunit protein uS4c (rps4).